Reading from the N-terminus, the 38-residue chain is Large ribosomal subunit protein bL36 (38 aa).

It belongs to the bacterial ribosomal protein bL36 family.

The chain is Large ribosomal subunit protein bL36 from Lacticaseibacillus casei (strain BL23) (Lactobacillus casei).